We begin with the raw amino-acid sequence, 352 residues long: Glycerol-1-phosphate dehydrogenase [NAD(P)+] (352 aa).

NAD(+)-binding positions include 98-102 and 120-123; these read GKAID and TAAS. Aspartate 125 is a binding site for substrate. NAD(+) is bound at residue serine 129. Residue aspartate 172 coordinates substrate. Residues aspartate 172 and histidine 252 each coordinate Zn(2+). Histidine 256 is a substrate binding site. Zn(2+) is bound at residue histidine 268.

This sequence belongs to the glycerol-1-phosphate dehydrogenase family. Zn(2+) is required as a cofactor.

It is found in the cytoplasm. It carries out the reaction sn-glycerol 1-phosphate + NAD(+) = dihydroxyacetone phosphate + NADH + H(+). It catalyses the reaction sn-glycerol 1-phosphate + NADP(+) = dihydroxyacetone phosphate + NADPH + H(+). It functions in the pathway membrane lipid metabolism; glycerophospholipid metabolism. Its function is as follows. Catalyzes the NAD(P)H-dependent reduction of dihydroxyacetonephosphate (DHAP or glycerone phosphate) to glycerol 1-phosphate (G1P). The G1P thus generated is used as the glycerophosphate backbone of phospholipids in the cellular membranes of Archaea. This is Glycerol-1-phosphate dehydrogenase [NAD(P)+] from Haloarcula marismortui (strain ATCC 43049 / DSM 3752 / JCM 8966 / VKM B-1809) (Halobacterium marismortui).